Here is a 496-residue protein sequence, read N- to C-terminus: Protein RepR (496 aa).

The DNA-binding element occupies 120 to 141 (SDILTTAIDLGFMPTLIIKSDK).

Its function is as follows. Essential for replication. This Streptococcus agalactiae protein is Protein RepR (repR).